The chain runs to 244 residues: Nuclear protein UL4 homolog (244 aa).

Positions 193–227 (RPDDQTTPTPTPHQYTSQRRQPETNCPSSPQPAFF) are disordered. The segment covering 205-220 (HQYTSQRRQPETNCPS) has biased composition (polar residues).

It belongs to the alphaherpesvirinae HHV-1 UL4 family.

The protein resides in the host nucleus. In Varicella-zoster virus (strain Dumas) (HHV-3), this protein is Nuclear protein UL4 homolog.